The following is a 338-amino-acid chain: Mitoferrin-1 (338 aa).

Positions 1–37 (MELRRGGVGSQAAGRRMDGDCRDGGCGSKDAGSEDYE) are disordered. 3 Solcar repeats span residues 43–131 (ASVS…MKRT), 141–225 (NSHL…LQEQ), and 232–326 (YNPQ…FKYF). The next 6 membrane-spanning stretches (helical) occupy residues 45–64 (VSTH…SIMY), 106–125 (GLNV…FACY), 143–162 (HLAN…AVMN), 200–219 (SYTT…FITY), 234–253 (PQSH…AATT), and 301–320 (GIQA…WSVY).

Belongs to the mitochondrial carrier (TC 2.A.29) family. As to quaternary structure, interacts with ACB10; this interaction stabilizes SLC25A37 and enhances the function of SLC25A37 to import mitochondrial iron during erythroid differentiation.

It is found in the mitochondrion inner membrane. It catalyses the reaction Fe(2+)(in) = Fe(2+)(out). Its function is as follows. Mitochondrial iron transporter that specifically mediates iron uptake in developing erythroid cells, thereby playing an essential role in heme biosynthesis. The polypeptide is Mitoferrin-1 (Slc25a37) (Rattus norvegicus (Rat)).